The following is a 302-amino-acid chain: Nucleotide-binding protein SERP0433 (302 aa).

G18–S25 provides a ligand contact to ATP. D69–G72 serves as a coordination point for GTP.

Belongs to the RapZ-like family.

Functionally, displays ATPase and GTPase activities. The protein is Nucleotide-binding protein SERP0433 of Staphylococcus epidermidis (strain ATCC 35984 / DSM 28319 / BCRC 17069 / CCUG 31568 / BM 3577 / RP62A).